A 408-amino-acid chain; its full sequence is Imidazolonepropionase (408 aa).

Positions 73 and 75 each coordinate Fe(3+). Zn(2+) contacts are provided by H73 and H75. The 4-imidazolone-5-propanoate site is built by R82, Y145, and H178. Residue Y145 participates in N-formimidoyl-L-glutamate binding. Position 243 (H243) interacts with Fe(3+). H243 is a binding site for Zn(2+). 4-imidazolone-5-propanoate is bound at residue Q246. D318 lines the Fe(3+) pocket. Residue D318 coordinates Zn(2+). Positions 320 and 322 each coordinate N-formimidoyl-L-glutamate. S323 provides a ligand contact to 4-imidazolone-5-propanoate.

Belongs to the metallo-dependent hydrolases superfamily. HutI family. The cofactor is Zn(2+). Requires Fe(3+) as cofactor.

It is found in the cytoplasm. The enzyme catalyses 4-imidazolone-5-propanoate + H2O = N-formimidoyl-L-glutamate. It participates in amino-acid degradation; L-histidine degradation into L-glutamate; N-formimidoyl-L-glutamate from L-histidine: step 3/3. Functionally, catalyzes the hydrolytic cleavage of the carbon-nitrogen bond in imidazolone-5-propanoate to yield N-formimidoyl-L-glutamate. It is the third step in the universal histidine degradation pathway. This chain is Imidazolonepropionase, found in Shewanella baltica (strain OS195).